A 295-amino-acid chain; its full sequence is MMAKKPPKPAPRRIFQERLKITALPLYFEGFLLIKRSGYREYEHYWTELRGTTLFFYTDKKSIIYVDKLDIVDLTCLTEQNSTEKNCAKFTLVLPKEEVQLKTENTESGEEWRGFILTVTELSVPQNVSLLPGQVIKLHEVLEREKKRRIETEQSTSVEKEKEPTEDYVDVLNPMPACFYTVSRKEATEMLQKNPSLGNMILRPGSDSRNYSITIRQEIDIPRIKHYKVMSVGQNYTIELEKPVTLPNLFSVIDYFVKETRGNLRPFICSTDENTGQEPSMEGRSEKLKKNPHIA.

Positions 25 to 121 constitute a PH domain; that stretch reads PLYFEGFLLI…WRGFILTVTE (97 aa). Phosphotyrosine is present on Tyr168. One can recognise an SH2 domain in the interval 177–280; sequence ACFYTVSRKE…TDENTGQEPS (104 aa). The disordered stretch occupies residues 270 to 295; that stretch reads STDENTGQEPSMEGRSEKLKKNPHIA.

Interacts with KIT and CSF1R. Interacts with URI1; the interaction is phosphorylation-dependent and occurs in a growth-dependent manner. Post-translationally, phosphorylated on tyrosine by TEC. Phosphorylated on tyrosine by KIT.

The protein resides in the nucleus. Its subcellular location is the cytoplasm. It localises to the mitochondrion. In BCR signaling, appears to function as a docking protein acting downstream of TEC and participates in a positive feedback loop by increasing the activity of TEC. The polypeptide is Signal-transducing adaptor protein 1 (STAP1) (Homo sapiens (Human)).